We begin with the raw amino-acid sequence, 113 residues long: Small ribosomal subunit protein eS24 (113 aa).

The protein belongs to the eukaryotic ribosomal protein eS24 family.

This Metallosphaera sedula (strain ATCC 51363 / DSM 5348 / JCM 9185 / NBRC 15509 / TH2) protein is Small ribosomal subunit protein eS24.